Reading from the N-terminus, the 327-residue chain is MIDFGNFYQQIAKGPLSHWLNTLPSQLSSWQQESLHGKFKLWFNSLEHLPSLKPTSLDLNDSVTARIEPDISVGQREGIEKLLRNLMPWRKGPFSLYGVDINTEWRSDWKWQRVLPHISPLKNRLILDVGCGSGYHLWRMVGEGATMAVGIDPMQLFLCQFEAVRKLLGDDQRAHVLPLGIEQLPELAAFDTVFSMGVLYHRRSPLDHLWQLKNQLVAGGELVLETLVIEGDENQVLVPGERYAQMRNVYFIPSAVALTTWLEKCGFVDVRIVDICTTTTQEQRRTDWMITESLAEFLDPEDPTKTVEGYPAPVRAVLVARKPGAEL.

Carboxy-S-adenosyl-L-methionine-binding positions include Lys91, Trp105, Lys110, Gly130, 181 to 182, Met196, Tyr200, and Arg315; that span reads IE.

The protein belongs to the class I-like SAM-binding methyltransferase superfamily. CmoB family. In terms of assembly, homotetramer.

The enzyme catalyses carboxy-S-adenosyl-L-methionine + 5-hydroxyuridine(34) in tRNA = 5-carboxymethoxyuridine(34) in tRNA + S-adenosyl-L-homocysteine + H(+). Catalyzes carboxymethyl transfer from carboxy-S-adenosyl-L-methionine (Cx-SAM) to 5-hydroxyuridine (ho5U) to form 5-carboxymethoxyuridine (cmo5U) at position 34 in tRNAs. The protein is tRNA U34 carboxymethyltransferase of Pectobacterium atrosepticum (strain SCRI 1043 / ATCC BAA-672) (Erwinia carotovora subsp. atroseptica).